A 310-amino-acid chain; its full sequence is Isoflavone reductase homolog P3 (310 aa).

Residues 12–18 (GGTGYIG), Arg37, and Lys46 each bind NADP(+). Lys134 (proton acceptor) is an active-site residue. Arg138 contributes to the NADP(+) binding site.

The protein belongs to the NmrA-type oxidoreductase family. Isoflavone reductase subfamily.

It localises to the cytoplasm. This is Isoflavone reductase homolog P3 from Arabidopsis thaliana (Mouse-ear cress).